The following is a 1277-amino-acid chain: NPC intracellular cholesterol transporter 1 (1277 aa).

The first 22 residues, 1-22 (MSARGPAFGLLLLLLCPVQVFS), serve as a signal peptide directing secretion. The Lumenal segment spans residues 23 to 269 (QSCVWYGECG…WRILGLDAMY (247 aa)). 9 disulfide bridges follow: C25–C74, C31–C42, C63–C109, C75–C113, C97–C238, C100–C160, C177–C184, C227–C243, and C240–C247. Residue N41 participates in cholesterol binding. Residue N70 is glycosylated (N-linked (GlcNAc...) asparagine). Q79 contacts cholesterol. N-linked (GlcNAc...) asparagine glycans are attached at residues N122 and N135. The interval 175 to 205 (LLCGREAQACNATNWIEYMFNKDNGQAPFTI) is important for cholesterol binding and cholesterol transfer from NPC1 to liposomes. N185 and N222 each carry an N-linked (GlcNAc...) asparagine glycan. The chain crosses the membrane as a helical span at residues 270 to 290 (VIMWSSYMAFLIVFFGAFFAV). At 291-350 (WCYRKRYFVSEYTPIDGNIAFSVNSSDKGQAFCCDPLGAAFERGLRRLFAQWGAFCVRHP) the chain is on the cytoplasmic side. A helical membrane pass occupies residues 351 to 371 (GCVVFFSLAFIVACSSGLVFI). The Lumenal portion of the chain corresponds to 372–621 (RVTTDPVDLW…ELNRESNSDL (250 aa)). N-linked (GlcNAc...) asparagine glycosylation is found at N415, N452, N459, and N478. Intrachain disulfides connect C468-C479 and C516-C533. One can recognise an SSD domain in the interval 620–785 (DLFTILISYA…ITCFVSLLGL (166 aa)). The chain crosses the membrane as a helical span at residues 622–642 (FTILISYAIMFLYISIALGHI). Over 643-653 (KSCSRLLVDSK) the chain is Cytoplasmic. Residues 654-674 (ISLGIAGILIVLSSVACSLGI) form a helical membrane-spanning segment. Residues 675 to 677 (FSY) are Lumenal-facing. A helical membrane pass occupies residues 678–698 (IGVPLTLIVIEVIPFLVLAVG). Residues 699–734 (VDNIFILVQTYQRDERLQGETLDQQLGRVLGEVAPS) are Cytoplasmic-facing. A helical membrane pass occupies residues 735–755 (MFLSSFSETVAFFLGGLSVVP). At 756-759 (AVHT) the chain is on the lumenal side. A helical transmembrane segment spans residues 760 to 780 (FSLFAGMAVLIDFLLQITCFV). Residues 781 to 832 (SLLGLDIKRQEKNRLDVVCCVQGAEDGAGVQASESCLFRFFKNSYAPLLLKD) are Cytoplasmic-facing. A helical transmembrane segment spans residues 833 to 853 (WMRPIVIAVFVGVLSFSIAVL). Over 854–1097 (NKVEIGLDQS…EQYLTVIDDT (244 aa)) the chain is Lumenal. N898 carries N-linked (GlcNAc...) asparagine glycosylation. An intrachain disulfide couples C909 to C914. N-linked (GlcNAc...) asparagine glycans are attached at residues N916, N931, N961, N968, N1028, and N1063. Cystine bridges form between C956/C1011, C957/C979, and C967/C976. A helical transmembrane segment spans residues 1098-1118 (IFNLGVSLGAIFLVTVVLMGC). Residues 1119–1123 (ELWAT) lie on the Cytoplasmic side of the membrane. The chain crosses the membrane as a helical span at residues 1124-1144 (VIMCVTIAMILVNMFGVMWLW). Position 1145 (G1145) is a topological domain, lumenal. The chain crosses the membrane as a helical span at residues 1146-1166 (ISLNAVSLVNLVMSCGISVEF). The Cytoplasmic portion of the chain corresponds to 1167–1194 (CSHITRAFTLSTKGSRVDRAEEALAHMG). The helical transmembrane segment at 1195 to 1215 (SSVFSGITLTKFGGIVVLAFA) threads the bilayer. At 1216–1226 (KSQIFQIFYFR) the chain is on the lumenal side. The chain crosses the membrane as a helical span at residues 1227–1247 (MYLAIVLLGATHGLIFLPVLL). Residues 1248–1277 (SYIGPSINKAKSLATQERYKGTEREQLLNF) are Cytoplasmic-facing. Residues 1274-1277 (LLNF) form a required for location in lysosomes region. Residues 1274–1277 (LLNF) carry the Di-leucine motif motif.

It belongs to the patched family. As to quaternary structure, interacts (via the second lumenal domain) with NPC2. Interacts with TMEM97; the interaction may decrease NPC1 availability to the cell. Interacts with TIM1. Interacts with SLC38A9; this interaction inhibits cholesterol-mediated mTORC1 activation via its sterol transport activity. N-glycosylated. Detected in corpus luteum, granulosa cells and adrenal gland.

The protein localises to the late endosome membrane. It localises to the lysosome membrane. The enzyme catalyses cholesterol(in) = cholesterol(out). Functionally, intracellular cholesterol transporter which acts in concert with NPC2 and plays an important role in the egress of cholesterol from the endosomal/lysosomal compartment. Unesterified cholesterol that has been released from LDLs in the lumen of the late endosomes/lysosomes is transferred by NPC2 to the cholesterol-binding pocket in the N-terminal domain of NPC1. Cholesterol binds to NPC1 with the hydroxyl group buried in the binding pocket. Binds oxysterol with higher affinity than cholesterol. May play a role in vesicular trafficking in glia, a process that may be crucial for maintaining the structural and functional integrity of nerve terminals. Inhibits cholesterol-mediated mTORC1 activation throught its interaction with SLC38A9. The polypeptide is NPC intracellular cholesterol transporter 1 (Sus scrofa (Pig)).